A 279-amino-acid polypeptide reads, in one-letter code: Ribosomal RNA small subunit methyltransferase J (279 aa).

S-adenosyl-L-methionine contacts are provided by residues 138–139 (ER) and Asp-194.

This sequence belongs to the methyltransferase superfamily. RsmJ family.

The protein localises to the cytoplasm. It carries out the reaction guanosine(1516) in 16S rRNA + S-adenosyl-L-methionine = N(2)-methylguanosine(1516) in 16S rRNA + S-adenosyl-L-homocysteine + H(+). In terms of biological role, specifically methylates the guanosine in position 1516 of 16S rRNA. This Acinetobacter baumannii (strain SDF) protein is Ribosomal RNA small subunit methyltransferase J.